We begin with the raw amino-acid sequence, 168 residues long: MTRFIPPATEVLIVADCWQAEAEAEAIVLRAIEAAAAMTDADTADAELAVMLTDDAGVQTLNANWRGIDKPTNVLSFPALQPEGDAPDDAPKMLGDIAIAYQTTRREADDEGKPFDHHLSHLAVHGFLHLVGYDHEKDAEAEAMESLEREILAQLGVPDPYADQDRVN.

Zn(2+) is bound by residues histidine 125, histidine 129, and histidine 135.

This sequence belongs to the endoribonuclease YbeY family. The cofactor is Zn(2+).

Its subcellular location is the cytoplasm. Its function is as follows. Single strand-specific metallo-endoribonuclease involved in late-stage 70S ribosome quality control and in maturation of the 3' terminus of the 16S rRNA. This is Endoribonuclease YbeY from Rhodopseudomonas palustris (strain BisB18).